Consider the following 877-residue polypeptide: MAAERYNPRVAEAHWQKVWEENRTFETDNSDSREKYYVLEMFPYPSGRIHMGHVRNYAMGDVVARYKRAKGFNVLHPMGWDAFGMPAENAAMQNKVHPKEWTYQNIATMKRQLKSMGLSLDWSREFATCDVEYYHRQQMLFIDLYEKGLVTRKTSKVNWDPVDNTVLANEQVVDGRGWRSGALVEQRELTQWFFKITDFSEELLAGLDTLDQWPEKVRLMQRNWIGKSEGLQVRFALAAGTAPAGFSEVEVYTTRPDTLFGAAFVAISADHPLAKKLSEGNAALSSFIEECHQQGTSLAALETAEKKGFDTGIKVKHPFDDNWELPVYVANFVLMEYGTGAVFGCPAHDQRDLDFANKYKLKVTPVVLPKGEDAASFSIGETAYTDDGVMINSRFLDGMTPEAAFNEVASRLEKTDLVGRPQAVRKVQFRLRDWGISRQRYWGCPIPMIHCESCGVNPVPRADLPVKLPDDVEFDRPGNPLDRHATWRHVKCPKCGGDARRETDTMDTFVDSSWYYTRFTAPWENEPTNRKAADHWLPVDQYIGGIEHAILHLLYSRFFTRAMKVAGHVGVDEPFKGLFTQGMVVHETYKANGQWVSPADIRIEEIDGKRVATMLDSGAPVEIGSIEKMSKSKKNVVDPDDIIASYGADTARWFVLSDSPPERDVIWTEAGAEGAHRFVQRIWRLVAEAAPALKDVAPKAGTQGEALGVSKAVHKAVKAVGDDIEKLAFNRGVARLYELVNTLSGALQQAADGKADAEMKGALREATEMLVLMTAPMMPHLAEQCLAELGGKVAGKETLVARAPWPVFDPALVVENEIVLPVQINGKKRGDLTIARDADQASIQQAVLELDFVKAALNGGSPKKIIVVPQRIVNVVA.

The short motif at 43-53 (PYPSGRIHMGH) is the 'HIGH' region element. Positions 628-632 (KMSKS) match the 'KMSKS' region motif. Residue lysine 631 participates in ATP binding.

This sequence belongs to the class-I aminoacyl-tRNA synthetase family.

The protein localises to the cytoplasm. The enzyme catalyses tRNA(Leu) + L-leucine + ATP = L-leucyl-tRNA(Leu) + AMP + diphosphate. This is Leucine--tRNA ligase from Brucella abortus (strain S19).